A 237-amino-acid chain; its full sequence is Sulfhydrogenase 2 subunit delta (237 aa).

[4Fe-4S] cluster-binding residues include C11, C14, C83, C132, C160, C163, C170, and C179. Residues C188, C192, C199, and C202 each coordinate [3Fe-4S] cluster.

This sequence belongs to the [NiFe]/[NiFeSe] hydrogenase small subunit family. Dimer of heterotetramer of alpha, beta, gamma and delta subunits. The nickel-containing alpha and delta subunits constitute the hydrogenase activity. The beta and gamma subunits (flavin-containing dimer) constitute the sulfur reductase activity. Requires Ni(2+) as cofactor. It depends on [4Fe-4S] cluster as a cofactor. [3Fe-4S] cluster is required as a cofactor.

The protein localises to the cytoplasm. It carries out the reaction H2 + NADP(+) = NADPH + H(+). The catalysed reaction is H2 + NAD(+) = NADH + H(+). Functionally, part of a bifunctional enzyme complex that functions as a hydrogen-evolving hydrogenase with sulfur-reducing activity. May play a role in hydrogen cycling during fermentative growth. Activity exhibited with NAD in addition to NADPH. The alpha and delta subunits form the hydrogenase component that catalyzes the reduction of protons to evolve hydrogen. The sequence is that of Sulfhydrogenase 2 subunit delta from Pyrococcus furiosus (strain ATCC 43587 / DSM 3638 / JCM 8422 / Vc1).